The chain runs to 144 residues: Small ribosomal subunit protein uS12 (144 aa).

The disordered stretch occupies residues methionine 1 to proline 55. Over residues glycine 27–glutamine 42 the composition is skewed to polar residues. Residue aspartate 102 is modified to 3-methylthioaspartic acid. Residues glycine 119–lysine 144 form a disordered region. The segment covering lysine 124–lysine 144 has biased composition (basic residues).

The protein belongs to the universal ribosomal protein uS12 family. As to quaternary structure, part of the 30S ribosomal subunit. Contacts proteins S8 and S17. May interact with IF1 in the 30S initiation complex.

In terms of biological role, with S4 and S5 plays an important role in translational accuracy. Its function is as follows. Interacts with and stabilizes bases of the 16S rRNA that are involved in tRNA selection in the A site and with the mRNA backbone. Located at the interface of the 30S and 50S subunits, it traverses the body of the 30S subunit contacting proteins on the other side and probably holding the rRNA structure together. The combined cluster of proteins S8, S12 and S17 appears to hold together the shoulder and platform of the 30S subunit. The protein is Small ribosomal subunit protein uS12 of Brevibacillus brevis (strain 47 / JCM 6285 / NBRC 100599).